The primary structure comprises 196 residues: Ribosomal RNA large subunit methyltransferase E (196 aa).

S-adenosyl-L-methionine contacts are provided by Gly-52, Trp-54, Asp-72, Asp-88, and Asp-111. Lys-151 (proton acceptor) is an active-site residue.

It belongs to the class I-like SAM-binding methyltransferase superfamily. RNA methyltransferase RlmE family.

Its subcellular location is the cytoplasm. The enzyme catalyses uridine(2552) in 23S rRNA + S-adenosyl-L-methionine = 2'-O-methyluridine(2552) in 23S rRNA + S-adenosyl-L-homocysteine + H(+). Specifically methylates the uridine in position 2552 of 23S rRNA at the 2'-O position of the ribose in the fully assembled 50S ribosomal subunit. This chain is Ribosomal RNA large subunit methyltransferase E, found in Cenarchaeum symbiosum (strain A).